Reading from the N-terminus, the 418-residue chain is Elongation factor 1-gamma 1 (418 aa).

The GST N-terminal domain maps to 1–82 (MALVLHTFDG…YVTRSKSDNP (82 aa)). A GST C-terminal domain is found at 87 to 213 (SLIEYAHIEQ…GDVKQADSVP (127 aa)). A disordered region spans residues 211–265 (SVPQVQKKAAAPKEQKPKEAKKEAPKEAPKPKAAEKPEEEEEAPKPKPKNPLDLL). The span at 221-246 (APKEQKPKEAKKEAPKEAPKPKAAEK) shows a compositional bias: basic and acidic residues. The EF-1-gamma C-terminal domain maps to 258 to 418 (PKNPLDLLPP…EALLDAKCFK (161 aa)).

As to quaternary structure, EF-1 is composed of four subunits: alpha, beta, delta, and gamma.

Its function is as follows. Probably plays a role in anchoring the complex to other cellular components. This is Elongation factor 1-gamma 1 from Oryza sativa subsp. japonica (Rice).